Here is a 292-residue protein sequence, read N- to C-terminus: Chronophin (292 aa).

Aspartate 25 acts as the Nucleophile in catalysis. Mg(2+) contacts are provided by aspartate 25 and aspartate 27. Catalysis depends on aspartate 27, which acts as the Proton donor. Residues 58 to 60, histidine 178, and lysine 209 each bind substrate; that span reads SNN. Residue aspartate 234 coordinates Mg(2+).

This sequence belongs to the HAD-like hydrolase superfamily. In terms of assembly, homodimer. The cofactor is Mg(2+). As to expression, ubiquitous. highly expressed in brain (at protein level).

The protein localises to the cytoplasm. It is found in the cytosol. It localises to the cytoskeleton. The protein resides in the cell projection. Its subcellular location is the ruffle membrane. The protein localises to the lamellipodium membrane. It is found in the cell membrane. It carries out the reaction pyridoxal 5'-phosphate + H2O = pyridoxal + phosphate. The enzyme catalyses pyridoxine 5'-phosphate + H2O = pyridoxine + phosphate. It catalyses the reaction pyridoxamine + phosphate = pyridoxamine 5'-phosphate + H2O. The catalysed reaction is O-phospho-L-seryl-[protein] + H2O = L-seryl-[protein] + phosphate. Inhibited by beryllium trifluoride. Functions as a pyridoxal phosphate (PLP) phosphatase, which also catalyzes the dephosphorylation of pyridoxine 5'-phosphate (PNP) and pyridoxamine 5'-phosphate (PMP), with order of substrate preference PLP &gt; PNP &gt; PMP and therefore plays a role in vitamin B6 metabolism. Also functions as a protein serine phosphatase that specifically dephosphorylates 'Ser-3' in proteins of the actin-depolymerizing factor (ADF)/cofilin family like CFL1 and DSTN. Thereby, regulates cofilin-dependent actin cytoskeleton reorganization, being required for normal progress through mitosis and normal cytokinesis. Does not dephosphorylate phosphothreonines in LIMK1. Does not dephosphorylate peptides containing phosphotyrosine. The protein is Chronophin of Mus musculus (Mouse).